The chain runs to 250 residues: Deoxynucleoside kinase (250 aa).

Residue 27-35 (GNIGSGKTT) coordinates ATP. The substrate site is built by Glu52, Tyr70, and Gln81. The active-site Proton acceptor is Glu104. Substrate is bound by residues Arg105 and Glu172. Phosphoserine occurs at positions 236, 241, and 243.

This sequence belongs to the DCK/DGK family. Monomer.

The enzyme catalyses a 2'-deoxyribonucleoside + ATP = a 2'-deoxyribonucleoside 5'-phosphate + ADP + H(+). Its activity is regulated as follows. Subject to feedback inhibition by dTTP. Deoxyribonucleoside kinase that has a broad specificity phosphorylating thymidine, 2'-deoxyriboadenosine, 2'-deoxyribocytidine and 2'-deoxyriboguanosine. Specificity is higher for pyrimidine nucleosides. Several anti-viral and anti-cancer nucleoside analogs are also efficiently phosphorylated. In Drosophila melanogaster (Fruit fly), this protein is Deoxynucleoside kinase (dnk).